A 546-amino-acid polypeptide reads, in one-letter code: Chaperonin GroEL (546 aa).

ATP is bound by residues 30–33 (TLGP), Lys51, 87–91 (DGTTT), Gly415, 479–481 (NAA), and Asp495. A disordered region spans residues 526–546 (KKDEPAMPAGGGMGGMGGMDF). A compositionally biased stretch (gly residues) spans 534 to 546 (AGGGMGGMGGMDF).

It belongs to the chaperonin (HSP60) family. In terms of assembly, forms a cylinder of 14 subunits composed of two heptameric rings stacked back-to-back. Interacts with the co-chaperonin GroES.

It is found in the cytoplasm. The catalysed reaction is ATP + H2O + a folded polypeptide = ADP + phosphate + an unfolded polypeptide.. Functionally, together with its co-chaperonin GroES, plays an essential role in assisting protein folding. The GroEL-GroES system forms a nano-cage that allows encapsulation of the non-native substrate proteins and provides a physical environment optimized to promote and accelerate protein folding. The chain is Chaperonin GroEL from Xanthomonas campestris pv. campestris (strain 8004).